Reading from the N-terminus, the 288-residue chain is Sulfhydrogenase 2 subunit gamma (288 aa).

In terms of domain architecture, FAD-binding FR-type spans 4–103; sequence YRSYDARIIE…RGPYGNGFPM (100 aa). The [2Fe-2S] cluster site is built by Cys250, Cys255, Cys258, and Cys270.

In terms of assembly, dimer of heterotetramer of alpha, beta, gamma and delta subunits. The nickel-containing alpha and delta subunits constitute the hydrogenase activity. The beta and gamma subunits (flavin-containing dimer) constitute the sulfur reductase activity. FAD serves as cofactor. [2Fe-2S] cluster is required as a cofactor.

The protein resides in the cytoplasm. The catalysed reaction is n sulfur + H2 = (n-1) sulfur + hydrogen sulfide + H(+). Functionally, part of a bifunctional enzyme complex that functions as a hydrogen-evolving hydrogenase with sulfur-reducing activity. May play a role in hydrogen cycling during fermentative growth. Activity exhibited with NAD in addition to NADPH. The beta and gamma subunits form the sulfur-reducing component that catalyzes the cytoplasmic production of hydrogen sulfide in the presence of elemental sulfur. The protein is Sulfhydrogenase 2 subunit gamma of Pyrococcus furiosus (strain ATCC 43587 / DSM 3638 / JCM 8422 / Vc1).